We begin with the raw amino-acid sequence, 458 residues long: MKEKALSIVILAAGKGTRMYSDLPKVLHKIAGKPMVKHVIDTVKSIHAKNIHLVYGHGGEVMQTRLQDEPVNWVLQAEQLGTGHAMQQAAPFFADDENILMLYGDGPLITAETLQTLIAAKPEHGIALLTVVLDDPTGYGRIVRENGNVVAIVEQKDANAEQLKIQEINTGLLVADGKSLKKWLSQLTNNNAQGEYYITDVIALANQDGCQVVAVQASDFMEVEGVNNRQQLARLERYYQRKQADNLLLAGVALADPERFDLRGELSHGKDVEIDVNVIIEGKVSLGHRVKIGAGCVLKNCQIGDDVEIKPYSVLEEAIVGQAAQIGPFSRLRPGTALADNTHIGNFVEIKKAHIGTGSKVNHLSYVGDAEVGMQCNIGAGVITCNYDGANKFKTIIGDNVFVGSDVQLVAPVTIETGATIGAGTTVTKDVACDELVISRVPQRHIQGWQRPTKQTKK.

Residues 1 to 229 (MKEKALSIVI…FMEVEGVNNR (229 aa)) are pyrophosphorylase. Residues 11–14 (LAAG), K25, Q76, 81–82 (GT), 103–105 (YGD), G140, E154, N169, and N227 contribute to the UDP-N-acetyl-alpha-D-glucosamine site. A Mg(2+)-binding site is contributed by D105. Residue N227 coordinates Mg(2+). Positions 230–250 (QQLARLERYYQRKQADNLLLA) are linker. The segment at 251 to 458 (GVALADPERF…WQRPTKQTKK (208 aa)) is N-acetyltransferase. UDP-N-acetyl-alpha-D-glucosamine contacts are provided by R333 and K351. H363 acts as the Proton acceptor in catalysis. Y366 and N377 together coordinate UDP-N-acetyl-alpha-D-glucosamine. Acetyl-CoA contacts are provided by residues A380, 386–387 (NY), S405, A423, and R440.

The protein in the N-terminal section; belongs to the N-acetylglucosamine-1-phosphate uridyltransferase family. This sequence in the C-terminal section; belongs to the transferase hexapeptide repeat family. In terms of assembly, homotrimer. It depends on Mg(2+) as a cofactor.

The protein resides in the cytoplasm. The catalysed reaction is alpha-D-glucosamine 1-phosphate + acetyl-CoA = N-acetyl-alpha-D-glucosamine 1-phosphate + CoA + H(+). It carries out the reaction N-acetyl-alpha-D-glucosamine 1-phosphate + UTP + H(+) = UDP-N-acetyl-alpha-D-glucosamine + diphosphate. It functions in the pathway nucleotide-sugar biosynthesis; UDP-N-acetyl-alpha-D-glucosamine biosynthesis; N-acetyl-alpha-D-glucosamine 1-phosphate from alpha-D-glucosamine 6-phosphate (route II): step 2/2. Its pathway is nucleotide-sugar biosynthesis; UDP-N-acetyl-alpha-D-glucosamine biosynthesis; UDP-N-acetyl-alpha-D-glucosamine from N-acetyl-alpha-D-glucosamine 1-phosphate: step 1/1. It participates in bacterial outer membrane biogenesis; LPS lipid A biosynthesis. Functionally, catalyzes the last two sequential reactions in the de novo biosynthetic pathway for UDP-N-acetylglucosamine (UDP-GlcNAc). The C-terminal domain catalyzes the transfer of acetyl group from acetyl coenzyme A to glucosamine-1-phosphate (GlcN-1-P) to produce N-acetylglucosamine-1-phosphate (GlcNAc-1-P), which is converted into UDP-GlcNAc by the transfer of uridine 5-monophosphate (from uridine 5-triphosphate), a reaction catalyzed by the N-terminal domain. This is Bifunctional protein GlmU from Pasteurella multocida (strain Pm70).